The primary structure comprises 469 residues: RNA-editing ligase 1, mitochondrial (469 aa).

The N-terminal 44 residues, 1 to 44, are a transit peptide targeting the mitochondrion; that stretch reads MQLQRLGAPLLKRLVGGCIRQSTAPIMPCVVVSGSGVFLTPVRT. Residues 59–61, 86–92, arginine 111, glutamate 159, phenylalanine 209, and 307–309 contribute to the ATP site; these read IEI, EKVHGTN, and KLR. The active-site N6-AMP-lysine intermediate is lysine 87. The interval 450–469 is disordered; sequence AAAQSEAIPPLSPAAPTKGE.

It belongs to the RNA ligase 2 family. In terms of assembly, component of the RNA editing complex (editosome), a 1600 kDa complex composed of at least 20 proteins. Interacts with terminal uridylyltransferase MEAT1.

Its subcellular location is the mitochondrion. The enzyme catalyses ATP + (ribonucleotide)n-3'-hydroxyl + 5'-phospho-(ribonucleotide)m = (ribonucleotide)n+m + AMP + diphosphate.. Functionally, essential for RNA editing. RNA editing in kinetoplastid mitochondria inserts and deletes uridylates at multiple sites in pre-mRNAs as directed by guide RNAs. The sequence is that of RNA-editing ligase 1, mitochondrial (REL1) from Trypanosoma brucei brucei.